The following is a 123-amino-acid chain: Small ribosomal subunit protein uS12 (123 aa).

The interval 1 to 21 (MPTIEQLVRKGRQAKPKKSKT) is disordered. A compositionally biased stretch (basic residues) spans 9-20 (RKGRQAKPKKSK). A 3-methylthioaspartic acid modification is found at Asp-89.

This sequence belongs to the universal ribosomal protein uS12 family. As to quaternary structure, part of the 30S ribosomal subunit. Contacts proteins S8 and S17. May interact with IF1 in the 30S initiation complex.

Functionally, with S4 and S5 plays an important role in translational accuracy. Interacts with and stabilizes bases of the 16S rRNA that are involved in tRNA selection in the A site and with the mRNA backbone. Located at the interface of the 30S and 50S subunits, it traverses the body of the 30S subunit contacting proteins on the other side and probably holding the rRNA structure together. The combined cluster of proteins S8, S12 and S17 appears to hold together the shoulder and platform of the 30S subunit. The protein is Small ribosomal subunit protein uS12 of Bifidobacterium longum subsp. infantis (strain ATCC 15697 / DSM 20088 / JCM 1222 / NCTC 11817 / S12).